We begin with the raw amino-acid sequence, 104 residues long: Large ribosomal subunit protein bL21 (104 aa).

This sequence belongs to the bacterial ribosomal protein bL21 family. In terms of assembly, part of the 50S ribosomal subunit. Contacts protein L20.

This protein binds to 23S rRNA in the presence of protein L20. The protein is Large ribosomal subunit protein bL21 of Helicobacter pylori (strain HPAG1).